The primary structure comprises 237 residues: 7-cyano-7-deazaguanine synthase (237 aa).

Tyr-9–Leu-19 is a binding site for ATP. Zn(2+) is bound by residues Cys-189, Cys-199, Cys-202, and Cys-205.

It belongs to the QueC family. Zn(2+) is required as a cofactor.

It catalyses the reaction 7-carboxy-7-deazaguanine + NH4(+) + ATP = 7-cyano-7-deazaguanine + ADP + phosphate + H2O + H(+). It participates in purine metabolism; 7-cyano-7-deazaguanine biosynthesis. In terms of biological role, catalyzes the ATP-dependent conversion of 7-carboxy-7-deazaguanine (CDG) to 7-cyano-7-deazaguanine (preQ(0)). The protein is 7-cyano-7-deazaguanine synthase of Geobacter sulfurreducens (strain ATCC 51573 / DSM 12127 / PCA).